We begin with the raw amino-acid sequence, 325 residues long: tRNA dimethylallyltransferase (325 aa).

25–32 is an ATP binding site; the sequence is GNTGSGKS. Residue 27-32 coordinates substrate; that stretch reads TGSGKS. The interval 50–53 is interaction with substrate tRNA; sequence DSRQ.

It belongs to the IPP transferase family. In terms of assembly, monomer. Mg(2+) is required as a cofactor.

The enzyme catalyses adenosine(37) in tRNA + dimethylallyl diphosphate = N(6)-dimethylallyladenosine(37) in tRNA + diphosphate. In terms of biological role, catalyzes the transfer of a dimethylallyl group onto the adenine at position 37 in tRNAs that read codons beginning with uridine, leading to the formation of N6-(dimethylallyl)adenosine (i(6)A). This is tRNA dimethylallyltransferase from Dehalococcoides mccartyi (strain ATCC BAA-2266 / KCTC 15142 / 195) (Dehalococcoides ethenogenes (strain 195)).